The following is a 157-amino-acid chain: Small ribosomal subunit protein uS7 (157 aa).

This sequence belongs to the universal ribosomal protein uS7 family. As to quaternary structure, part of the 30S ribosomal subunit. Contacts proteins S9 and S11.

Its function is as follows. One of the primary rRNA binding proteins, it binds directly to 16S rRNA where it nucleates assembly of the head domain of the 30S subunit. Is located at the subunit interface close to the decoding center, probably blocks exit of the E-site tRNA. This is Small ribosomal subunit protein uS7 from Stenotrophomonas maltophilia (strain R551-3).